The chain runs to 1097 residues: DNA-directed RNA polymerase subunit beta (1097 aa).

The disordered stretch occupies residues 1072-1097 (QDVNPRRSTPSRPTYESLGVADYDED).

It belongs to the RNA polymerase beta chain family. In cyanobacteria the RNAP catalytic core is composed of 2 alpha, 1 beta, 1 beta', 1 gamma and 1 omega subunit. When a sigma factor is associated with the core the holoenzyme is formed, which can initiate transcription.

It catalyses the reaction RNA(n) + a ribonucleoside 5'-triphosphate = RNA(n+1) + diphosphate. Functionally, DNA-dependent RNA polymerase catalyzes the transcription of DNA into RNA using the four ribonucleoside triphosphates as substrates. In Synechococcus sp. (strain WH7803), this protein is DNA-directed RNA polymerase subunit beta.